The following is a 900-amino-acid chain: Bifunctional uridylyltransferase/uridylyl-removing enzyme (900 aa).

The tract at residues 1-342 is uridylyltransferase; sequence MPQVDPELFD…PCEQPVQIQP (342 aa). The segment at 343–705 is uridylyl-removing; sequence LNSRFQLRDG…TTQREFESGS (363 aa). Positions 461–583 constitute an HD domain; sequence VDAHTLNLIK…VGDQTHLDYL (123 aa). ACT domains lie at 706–789 and 816–891; these read QIFI…IIQR and VLEV…DNGR.

It belongs to the GlnD family. Requires Mg(2+) as cofactor.

The catalysed reaction is [protein-PII]-L-tyrosine + UTP = [protein-PII]-uridylyl-L-tyrosine + diphosphate. It catalyses the reaction [protein-PII]-uridylyl-L-tyrosine + H2O = [protein-PII]-L-tyrosine + UMP + H(+). Uridylyltransferase (UTase) activity is inhibited by glutamine, while glutamine activates uridylyl-removing (UR) activity. Functionally, modifies, by uridylylation and deuridylylation, the PII regulatory proteins (GlnB and homologs), in response to the nitrogen status of the cell that GlnD senses through the glutamine level. Under low glutamine levels, catalyzes the conversion of the PII proteins and UTP to PII-UMP and PPi, while under higher glutamine levels, GlnD hydrolyzes PII-UMP to PII and UMP (deuridylylation). Thus, controls uridylylation state and activity of the PII proteins, and plays an important role in the regulation of nitrogen assimilation and metabolism. This chain is Bifunctional uridylyltransferase/uridylyl-removing enzyme, found in Pseudomonas aeruginosa (strain LESB58).